The following is a 271-amino-acid chain: Pyrroline-5-carboxylate reductase (271 aa).

This sequence belongs to the pyrroline-5-carboxylate reductase family.

It is found in the cytoplasm. The catalysed reaction is L-proline + NADP(+) = (S)-1-pyrroline-5-carboxylate + NADPH + 2 H(+). It catalyses the reaction L-proline + NAD(+) = (S)-1-pyrroline-5-carboxylate + NADH + 2 H(+). The protein operates within amino-acid biosynthesis; L-proline biosynthesis; L-proline from L-glutamate 5-semialdehyde: step 1/1. Its function is as follows. Catalyzes the reduction of 1-pyrroline-5-carboxylate (PCA) to L-proline. This Staphylococcus aureus (strain Mu50 / ATCC 700699) protein is Pyrroline-5-carboxylate reductase.